Reading from the N-terminus, the 351-residue chain is Cardiolipin synthase (CMP-forming) (351 aa).

The segment at 74 to 120 (PAPQLSASHQHQAQQQQQQTKQPQQPYDPQQDQVPSTSTASSSKPAA) is disordered. Residues 76 to 120 (PQLSASHQHQAQQQQQQTKQPQQPYDPQQDQVPSTSTASSSKPAA) show a composition bias toward low complexity. 5 helical membrane-spanning segments follow: residues 139-159 (PLIG…ALAV), 191-211 (VLIG…GWVA), 251-271 (AAAA…GGGG), 280-300 (PLLI…GYLL), and 321-341 (LIMG…LAYG).

Belongs to the CDP-alcohol phosphatidyltransferase class-I family. The cofactor is Mn(2+).

The protein resides in the mitochondrion inner membrane. The enzyme catalyses a CDP-1,2-diacyl-sn-glycerol + a 1,2-diacyl-sn-glycero-3-phospho-(1'-sn-glycerol) = a cardiolipin + CMP + H(+). In terms of biological role, catalyzes the synthesis of cardiolipin (CL) (diphosphatidylglycerol) by specifically transferring a phosphatidyl group from CDP-diacylglycerol to phosphatidylglycerol (PG). CL is a key phospholipid in mitochondrial membranes and plays important roles in maintaining the functional integrity and dynamics of mitochondria under both optimal and stress conditions. Cannot catalyze the phosphatidyl group transfer from one PG molecule to another to form CL. The protein is Cardiolipin synthase (CMP-forming) of Chlamydomonas reinhardtii (Chlamydomonas smithii).